The sequence spans 262 residues: Spindlin-W (262 aa).

The interval 1–49 (MKTPFGKSPAQRSRADAGHTRVSASMMKKRTSHKKHRNNVGPSKPISQP) is disordered. Residues 27 to 38 (MKKRTSHKKHRN) show a composition bias toward basic residues.

Belongs to the SPIN/STSY family. In terms of tissue distribution, expressed predominantly in ovarian granulosa and thecal cell.

It is found in the nucleus. May play a role in mitosis. The sequence is that of Spindlin-W (SPINW) from Gallus gallus (Chicken).